Reading from the N-terminus, the 257-residue chain is UPF0246 protein AHA_3667 (257 aa).

Belongs to the UPF0246 family.

The sequence is that of UPF0246 protein AHA_3667 from Aeromonas hydrophila subsp. hydrophila (strain ATCC 7966 / DSM 30187 / BCRC 13018 / CCUG 14551 / JCM 1027 / KCTC 2358 / NCIMB 9240 / NCTC 8049).